The following is a 135-amino-acid chain: D-ribose pyranase (135 aa).

The active-site Proton donor is His-20. Substrate contacts are provided by residues Asp-28, His-102, and 124–126 (YAN).

It belongs to the RbsD / FucU family. RbsD subfamily. In terms of assembly, homodecamer.

It localises to the cytoplasm. The enzyme catalyses beta-D-ribopyranose = beta-D-ribofuranose. Its pathway is carbohydrate metabolism; D-ribose degradation; D-ribose 5-phosphate from beta-D-ribopyranose: step 1/2. Catalyzes the interconversion of beta-pyran and beta-furan forms of D-ribose. This chain is D-ribose pyranase, found in Rhodopirellula baltica (strain DSM 10527 / NCIMB 13988 / SH1).